Here is a 394-residue protein sequence, read N- to C-terminus: Protein maelstrom (394 aa).

Residues 2–69 constitute a DNA-binding region (HMG box); that stretch reads APKKQNGFMM…ARRDKRGSLN (68 aa). Residues 44-93 form a disordered region; it reads TQQRGPYNSDAKDANAARRDKRGSLNGHGQVDKAQREAAESLMDKAQREA. Positions 73–93 are enriched in basic and acidic residues; the sequence is QVDKAQREAAESLMDKAQREA.

The protein belongs to the maelstrom family.

It is found in the cytoplasm. Its subcellular location is the nucleus. Involved both in the piRNA and miRNA metabolic processes. As a component of the meiotic nuage, plays a central role during oogenesis by repressing transposable elements and preventing their mobilization, which is essential for the germline integrity. Repression of transposable elements is mediated via the piRNA metabolic process, which mediates the repression of transposable elements during meiosis by forming complexes composed of piRNAs and Piwi proteins and governs the repression of transposons. As a nuclear component, it is required for proper differentiation in the germline stem cell (GSC) lineage by repressing microRNA-7 (miR-7), thereby acting as an indirect regulator of bag-of-marbles (Bam). Acts by binding to the promoter of miR-7 gene and repressing its expression; miR-7 repression alleviates the Bam repression by miR-7, thereby allowing differentiation in the germline stem cell (GSC) lineage. The protein is Protein maelstrom (mael) of Drosophila sechellia (Fruit fly).